The primary structure comprises 232 residues: 6-phosphogluconolactonase (232 aa).

The protein belongs to the glucosamine/galactosamine-6-phosphate isomerase family. 6-phosphogluconolactonase subfamily.

It catalyses the reaction 6-phospho-D-glucono-1,5-lactone + H2O = 6-phospho-D-gluconate + H(+). It functions in the pathway carbohydrate degradation; pentose phosphate pathway; D-ribulose 5-phosphate from D-glucose 6-phosphate (oxidative stage): step 2/3. Its function is as follows. Hydrolysis of 6-phosphogluconolactone to 6-phosphogluconate. This Rhizobium meliloti (strain 1021) (Ensifer meliloti) protein is 6-phosphogluconolactonase (pgl).